The primary structure comprises 1234 residues: DNA-directed RNA polymerase subunit beta (1234 aa).

Residues Val-1189 to Asp-1212 are disordered. Residues Asn-1195–Asp-1212 are compositionally biased toward acidic residues.

The protein belongs to the RNA polymerase beta chain family. In terms of assembly, the RNAP catalytic core consists of 2 alpha, 1 beta, 1 beta' and 1 omega subunit. When a sigma factor is associated with the core the holoenzyme is formed, which can initiate transcription.

It catalyses the reaction RNA(n) + a ribonucleoside 5'-triphosphate = RNA(n+1) + diphosphate. Its function is as follows. DNA-dependent RNA polymerase catalyzes the transcription of DNA into RNA using the four ribonucleoside triphosphates as substrates. In Clostridium kluyveri (strain NBRC 12016), this protein is DNA-directed RNA polymerase subunit beta.